A 957-amino-acid chain; its full sequence is Bifunctional glutamine synthetase adenylyltransferase/adenylyl-removing enzyme (957 aa).

An adenylyl removase region spans residues 1 to 449 (MTQHLERPEL…VFDDIIGTDE (449 aa)). Positions 457 to 957 (SEQYNEMWTM…QEYLVPSSDE (501 aa)) are adenylyl transferase.

Belongs to the GlnE family. It depends on Mg(2+) as a cofactor.

It catalyses the reaction [glutamine synthetase]-O(4)-(5'-adenylyl)-L-tyrosine + phosphate = [glutamine synthetase]-L-tyrosine + ADP. The enzyme catalyses [glutamine synthetase]-L-tyrosine + ATP = [glutamine synthetase]-O(4)-(5'-adenylyl)-L-tyrosine + diphosphate. Functionally, involved in the regulation of glutamine synthetase GlnA, a key enzyme in the process to assimilate ammonia. When cellular nitrogen levels are high, the C-terminal adenylyl transferase (AT) inactivates GlnA by covalent transfer of an adenylyl group from ATP to specific tyrosine residue of GlnA, thus reducing its activity. Conversely, when nitrogen levels are low, the N-terminal adenylyl removase (AR) activates GlnA by removing the adenylyl group by phosphorolysis, increasing its activity. The regulatory region of GlnE binds the signal transduction protein PII (GlnB) which indicates the nitrogen status of the cell. This is Bifunctional glutamine synthetase adenylyltransferase/adenylyl-removing enzyme from Photobacterium profundum (strain SS9).